The sequence spans 165 residues: Ubiquitin-conjugating enzyme E2 G2 (165 aa).

Position 2 is an N-acetylalanine (Ala-2). The region spanning 4 to 164 is the UBC core domain; that stretch reads TALKRLMAEY…AKQIVQKSLG (161 aa). Cys-89 functions as the Glycyl thioester intermediate in the catalytic mechanism.

This sequence belongs to the ubiquitin-conjugating enzyme family. Interacts with AUP1 (via C-terminus); the interaction recruits UBE2G2 to lipid droplets. Interacts with ubiquitin ligases AMFR/gp78 and RNF139/TRC8; recruitment to lipid droplets by AUP1 facilitates interaction of UBE2G2 with AMFR and RNF139, leading to sterol-induced ubiquitination of 3-hydroxy-3-methylglutaryl coenzyme A reductase and its subsequent proteasomal degradation.

It is found in the endoplasmic reticulum. Its subcellular location is the lipid droplet. It catalyses the reaction S-ubiquitinyl-[E1 ubiquitin-activating enzyme]-L-cysteine + [E2 ubiquitin-conjugating enzyme]-L-cysteine = [E1 ubiquitin-activating enzyme]-L-cysteine + S-ubiquitinyl-[E2 ubiquitin-conjugating enzyme]-L-cysteine.. Its pathway is protein modification; protein ubiquitination. Its function is as follows. Accepts ubiquitin from the E1 complex and catalyzes its covalent attachment to other proteins. In vitro catalyzes 'Lys-48'-linked polyubiquitination. Involved in endoplasmic reticulum-associated degradation (ERAD). Required for sterol-induced ubiquitination of 3-hydroxy-3-methylglutaryl coenzyme A reductase and its subsequent proteasomal degradation. The chain is Ubiquitin-conjugating enzyme E2 G2 from Bos taurus (Bovine).